The following is a 236-amino-acid chain: Ubiquinone biosynthesis O-methyltransferase (236 aa).

S-adenosyl-L-methionine is bound by residues R39, G59, D80, and M124.

This sequence belongs to the methyltransferase superfamily. UbiG/COQ3 family.

The enzyme catalyses a 3-demethylubiquinol + S-adenosyl-L-methionine = a ubiquinol + S-adenosyl-L-homocysteine + H(+). It carries out the reaction a 3-(all-trans-polyprenyl)benzene-1,2-diol + S-adenosyl-L-methionine = a 2-methoxy-6-(all-trans-polyprenyl)phenol + S-adenosyl-L-homocysteine + H(+). Its pathway is cofactor biosynthesis; ubiquinone biosynthesis. O-methyltransferase that catalyzes the 2 O-methylation steps in the ubiquinone biosynthetic pathway. This is Ubiquinone biosynthesis O-methyltransferase from Shewanella sp. (strain MR-4).